A 1397-amino-acid chain; its full sequence is DNA-directed RNA polymerase subunit beta (1397 aa).

The protein belongs to the RNA polymerase beta chain family. As to quaternary structure, the RNAP catalytic core consists of 2 alpha, 1 beta, 1 beta' and 1 omega subunit. When a sigma factor is associated with the core the holoenzyme is formed, which can initiate transcription.

It carries out the reaction RNA(n) + a ribonucleoside 5'-triphosphate = RNA(n+1) + diphosphate. In terms of biological role, DNA-dependent RNA polymerase catalyzes the transcription of DNA into RNA using the four ribonucleoside triphosphates as substrates. This is DNA-directed RNA polymerase subunit beta from Rhodospirillum centenum (strain ATCC 51521 / SW).